The chain runs to 151 residues: MKVQTKWFGEIEVSEDKIITFDKGIIGFEDWKKYTLVYDAEKEENISIIWLQAIDEPTLALPVMKPEFVFETYDPVVEDELLKALGDDIQDDNIRVYCALTVPRDITKMTINLKAPIIVDFDTMKGIQLIADNSEYQVRYPIYDILKKEEN.

The protein belongs to the FliW family. Interacts with translational regulator CsrA and flagellin(s).

Its subcellular location is the cytoplasm. In terms of biological role, acts as an anti-CsrA protein, binds CsrA and prevents it from repressing translation of its target genes, one of which is flagellin. Binds to flagellin and participates in the assembly of the flagellum. This is Flagellar assembly factor FliW from Lachnospira eligens (strain ATCC 27750 / DSM 3376 / VPI C15-48 / C15-B4) (Eubacterium eligens).